Consider the following 296-residue polypeptide: Light-independent protochlorophyllide reductase iron-sulfur ATP-binding protein (296 aa).

ATP is bound by residues 39 to 44 and Lys-68; that span reads GIGKST. Ser-43 is a Mg(2+) binding site. [4Fe-4S] cluster contacts are provided by Cys-124 and Cys-158. 209-210 is a binding site for ATP; it reads NR.

This sequence belongs to the NifH/BchL/ChlL family. As to quaternary structure, homodimer. Protochlorophyllide reductase is composed of three subunits; ChlL, ChlN and ChlB. [4Fe-4S] cluster serves as cofactor.

It catalyses the reaction chlorophyllide a + oxidized 2[4Fe-4S]-[ferredoxin] + 2 ADP + 2 phosphate = protochlorophyllide a + reduced 2[4Fe-4S]-[ferredoxin] + 2 ATP + 2 H2O. The protein operates within porphyrin-containing compound metabolism; chlorophyll biosynthesis (light-independent). Functionally, component of the dark-operative protochlorophyllide reductase (DPOR) that uses Mg-ATP and reduced ferredoxin to reduce ring D of protochlorophyllide (Pchlide) to form chlorophyllide a (Chlide). This reaction is light-independent. The L component serves as a unique electron donor to the NB-component of the complex, and binds Mg-ATP. In Synechococcus sp. (strain CC9605), this protein is Light-independent protochlorophyllide reductase iron-sulfur ATP-binding protein.